A 206-amino-acid polypeptide reads, in one-letter code: Thymidylate kinase (206 aa).

10–17 provides a ligand contact to ATP; that stretch reads GVDGVGKT.

Belongs to the thymidylate kinase family.

It catalyses the reaction dTMP + ATP = dTDP + ADP. Its function is as follows. Phosphorylation of dTMP to form dTDP in both de novo and salvage pathways of dTTP synthesis. This Bifidobacterium longum (strain NCC 2705) protein is Thymidylate kinase.